The following is a 419-amino-acid chain: Zinc metalloprotease RasP (419 aa).

The next 4 helical transmembrane spans lie at 4–24, 173–193, 349–369, and 391–411; these read VIAF…GHLI, IAAG…MLGL, LAAF…PALD, and EAFV…VVTW. Residue His-18 participates in Zn(2+) binding. Residue Glu-19 is part of the active site. Position 22 (His-22) interacts with Zn(2+). Positions 184 to 269 constitute a PDZ domain; the sequence is AYVILVMLGL…KLTKYVTPEA (86 aa).

Belongs to the peptidase M50B family. Zn(2+) is required as a cofactor.

The protein resides in the cell membrane. Its function is as follows. Is responsible for Site-2 cleavage of the RsiW anti-sigma factor. This results, after a third proteolytic step catalyzed by the ClpXP protease, in the release of SigW and the transcription activation of the genes under the control of the sigma-W factor. The chain is Zinc metalloprotease RasP (rasP) from Bacillus licheniformis (strain ATCC 14580 / DSM 13 / JCM 2505 / CCUG 7422 / NBRC 12200 / NCIMB 9375 / NCTC 10341 / NRRL NRS-1264 / Gibson 46).